Here is a 55-residue protein sequence, read N- to C-terminus: ATP synthase F(0) complex subunit 8 (55 aa).

A helical transmembrane segment spans residues Leu-4–Ile-24.

The protein belongs to the ATPase protein 8 family. In terms of assembly, component of the ATP synthase complex composed at least of ATP5F1A/subunit alpha, ATP5F1B/subunit beta, ATP5MC1/subunit c (homooctomer), MT-ATP6/subunit a, MT-ATP8/subunit 8, ATP5ME/subunit e, ATP5MF/subunit f, ATP5MG/subunit g, ATP5MK/subunit k, ATP5MJ/subunit j, ATP5F1C/subunit gamma, ATP5F1D/subunit delta, ATP5F1E/subunit epsilon, ATP5PF/subunit F6, ATP5PB/subunit b, ATP5PD/subunit d, ATP5PO/subunit OSCP. ATP synthase complex consists of a soluble F(1) head domain (subunits alpha(3) and beta(3)) - the catalytic core - and a membrane F(0) domain - the membrane proton channel (subunits c, a, 8, e, f, g, k and j). These two domains are linked by a central stalk (subunits gamma, delta, and epsilon) rotating inside the F1 region and a stationary peripheral stalk (subunits F6, b, d, and OSCP).

Its subcellular location is the mitochondrion membrane. Functionally, subunit 8, of the mitochondrial membrane ATP synthase complex (F(1)F(0) ATP synthase or Complex V) that produces ATP from ADP in the presence of a proton gradient across the membrane which is generated by electron transport complexes of the respiratory chain. ATP synthase complex consist of a soluble F(1) head domain - the catalytic core - and a membrane F(1) domain - the membrane proton channel. These two domains are linked by a central stalk rotating inside the F(1) region and a stationary peripheral stalk. During catalysis, ATP synthesis in the catalytic domain of F(1) is coupled via a rotary mechanism of the central stalk subunits to proton translocation. In vivo, can only synthesize ATP although its ATP hydrolase activity can be activated artificially in vitro. Part of the complex F(0) domain. The protein is ATP synthase F(0) complex subunit 8 of Dicentrarchus labrax (European seabass).